A 609-amino-acid polypeptide reads, in one-letter code: MQRSQRLSQMLFVTLREDPAEAELISHKLLLRGGFIRRLSPGIYTYLPLLWRVLQKISDIVREEMNAIGAQECLLPQLQPAEIWRESGRWDVYTQAEGIMFALKDRQGREQALGPTHEEVITLLARDLIRSYRQLPQILYQIQTKFRDEIRPRFGLLRGREFLMKDAYSFHANEESLRQTYQDMYRAYGRILRRCGLEFCVVEADAGAIGGPSAASQEFMVLASAGEDEILYTPDGSYAANVEKAVSLPPPAADSPYTTFQVLDTPGTETIEKLANFLKISPTLIVKNVLYQALYDNGLRVVVLLSIRGDQEVNEVKLANHLNRLAERYQANKLLKLTLADAEIQKSWQGDPIPVGYIAPDLPDSCLGRQKNLAPQILRLADQTAALLKNFVTGSNQVGRHVVGANWGEQYPLAEVVDVRKAQAGDRCLLNPDQILETARGIEIGHIFQLGLKFSLPMRASFTDEQGSEQPLWMGCYGIGVSRLAQAAVEQSHDANGIIWPVAIAPYHVVVVVPNVSDPEQTKVAEKLVQELAAAGIETLWDDRDERAGVKFKDADLIGIPYRLTTGRSLKQGKVELAERATGQAVEIPIEEVVATLKERIAAALAVPD.

Belongs to the class-II aminoacyl-tRNA synthetase family. ProS type 1 subfamily. As to quaternary structure, homodimer.

The protein resides in the cytoplasm. It catalyses the reaction tRNA(Pro) + L-proline + ATP = L-prolyl-tRNA(Pro) + AMP + diphosphate. Functionally, catalyzes the attachment of proline to tRNA(Pro) in a two-step reaction: proline is first activated by ATP to form Pro-AMP and then transferred to the acceptor end of tRNA(Pro). As ProRS can inadvertently accommodate and process non-cognate amino acids such as alanine and cysteine, to avoid such errors it has two additional distinct editing activities against alanine. One activity is designated as 'pretransfer' editing and involves the tRNA(Pro)-independent hydrolysis of activated Ala-AMP. The other activity is designated 'posttransfer' editing and involves deacylation of mischarged Ala-tRNA(Pro). The misacylated Cys-tRNA(Pro) is not edited by ProRS. The sequence is that of Proline--tRNA ligase from Synechococcus sp. (strain JA-3-3Ab) (Cyanobacteria bacterium Yellowstone A-Prime).